Consider the following 425-residue polypeptide: Histone-binding protein RBBP7 (425 aa).

WD repeat units lie at residues 47–122 (QWLP…KINH), 128–173 (RARY…LRLR), 181–217 (GLSW…KVVD), 228–269 (VVED…HSVD), 275–312 (VNCL…LHSF), 318–369 (EIFQ…LFIH), and 376–403 (ISDF…IWQM).

The protein belongs to the WD repeat RBAP46/RBAP48/MSI1 family. Binds directly to helix 1 of the histone fold of histone H4, a region that is not accessible when H4 is in chromatin.

The protein resides in the nucleus. Functionally, core histone-binding subunit that may target chromatin remodeling factors, histone acetyltransferases and histone deacetylases to their histone substrates in a manner that is regulated by nucleosomal DNA. Component of several complexes which regulate chromatin metabolism. In Xenopus tropicalis (Western clawed frog), this protein is Histone-binding protein RBBP7 (rbbp7).